We begin with the raw amino-acid sequence, 294 residues long: N-acetylmuramic acid 6-phosphate etherase (294 aa).

The region spanning 54–217 (VIQSFEEEGR…STASMIGVGK (164 aa)) is the SIS domain. The active-site Proton donor is the Glu-82. The active site involves Glu-113.

Belongs to the GCKR-like family. MurNAc-6-P etherase subfamily. As to quaternary structure, homodimer.

The enzyme catalyses N-acetyl-D-muramate 6-phosphate + H2O = N-acetyl-D-glucosamine 6-phosphate + (R)-lactate. Its pathway is amino-sugar metabolism; N-acetylmuramate degradation. Functionally, specifically catalyzes the cleavage of the D-lactyl ether substituent of MurNAc 6-phosphate, producing GlcNAc 6-phosphate and D-lactate. In Bacillus cereus (strain AH820), this protein is N-acetylmuramic acid 6-phosphate etherase.